A 620-amino-acid polypeptide reads, in one-letter code: Dihydroxy-acid dehydratase (620 aa).

Position 81 (D81) interacts with Mg(2+). C122 serves as a coordination point for [2Fe-2S] cluster. Residues D123 and K124 each coordinate Mg(2+). Residue K124 is modified to N6-carboxylysine. C195 is a [2Fe-2S] cluster binding site. E491 lines the Mg(2+) pocket. Residue S517 is the Proton acceptor of the active site.

The protein belongs to the IlvD/Edd family. As to quaternary structure, homodimer. It depends on [2Fe-2S] cluster as a cofactor. Requires Mg(2+) as cofactor.

It catalyses the reaction (2R)-2,3-dihydroxy-3-methylbutanoate = 3-methyl-2-oxobutanoate + H2O. It carries out the reaction (2R,3R)-2,3-dihydroxy-3-methylpentanoate = (S)-3-methyl-2-oxopentanoate + H2O. The protein operates within amino-acid biosynthesis; L-isoleucine biosynthesis; L-isoleucine from 2-oxobutanoate: step 3/4. It participates in amino-acid biosynthesis; L-valine biosynthesis; L-valine from pyruvate: step 3/4. In terms of biological role, functions in the biosynthesis of branched-chain amino acids. Catalyzes the dehydration of (2R,3R)-2,3-dihydroxy-3-methylpentanoate (2,3-dihydroxy-3-methylvalerate) into 2-oxo-3-methylpentanoate (2-oxo-3-methylvalerate) and of (2R)-2,3-dihydroxy-3-methylbutanoate (2,3-dihydroxyisovalerate) into 2-oxo-3-methylbutanoate (2-oxoisovalerate), the penultimate precursor to L-isoleucine and L-valine, respectively. This chain is Dihydroxy-acid dehydratase, found in Colwellia psychrerythraea (strain 34H / ATCC BAA-681) (Vibrio psychroerythus).